Reading from the N-terminus, the 833-residue chain is Protein PAT1 homolog 1 (833 aa).

3 disordered regions span residues 279–313 (DMRE…MHGM), 398–427 (NIRQ…SGMP), and 492–549 (EEAT…DKKL). Over residues 303–313 (PSLSPGGMHGM) the composition is skewed to low complexity. The span at 398–408 (NIRQNGPQFSH) shows a compositional bias: polar residues.

Belongs to the PAT1 family.

Its subcellular location is the cytoplasm. It is found in the P-body. Its function is as follows. RNA-binding protein involved in deadenylation-dependent decapping of mRNAs, leading to the degradation of mRNAs. Acts as a scaffold protein that connects deadenylation and decapping machinery. Required for the recruitment of P-body components such as cgh-1 in somatic blastomeres. May play a role in recruiting the decapping enzyme dcap-1 to cytoplasmic puncta in the cell body of the posterior touch receptor neuron, PLM. The chain is Protein PAT1 homolog 1 from Caenorhabditis elegans.